We begin with the raw amino-acid sequence, 780 residues long: Striatin (780 aa).

A coiled-coil region spans residues 53 to 120 (LHFLQHEWAR…QERAKYHKLK (68 aa)). The interval 55–63 (FLQHEWARF) is caveolin-binding. The segment at 124 to 145 (ELNQGDMKPPSYDSDEGNETEV) is disordered. Position 137 is a phosphoserine (Ser137). The segment at 149 to 166 (QNSQFMWKQGRQLLRQYL) is calmodulin-binding. At Thr225 the chain carries Phosphothreonine. A phosphoserine mark is found at Ser227, Ser229, Ser245, and Ser259. Disordered regions lie at residues 290-321 (FLVA…TPER), 334-353 (EQYK…NRSK), and 363-388 (DVDE…LPEQ). The span at 299 to 315 (NESRSAGDGTDWEKEDQ) shows a compositional bias: basic and acidic residues. Residues 338–351 (KERKGKKGVKRPNR) are compositionally biased toward basic residues. 6 WD repeats span residues 461–500 (SHFD…PAKK), 514–553 (AHKG…VDPY), 567–606 (GHTD…PALT), 662–701 (SSSC…LIHS), 704–743 (AHLE…CIQE), and 750–780 (KFEE…KVFV).

It belongs to the WD repeat striatin family. Part of the core of STRIPAK complexes composed of PP2A catalytic and scaffolding subunits, the striatins (PP2A regulatory subunits), the striatin-associated proteins MOB4, STRIP1 and STRIP2, PDCD10 and members of the STE20 kinases, such as STK24 and STK26. Interacts with CTTNBP2; this interaction may regulate dendritic spine distribution of STRN. Activation of glutamate receptors weakens the interaction with CTTNBP2. In terms of tissue distribution, mainly expressed in the central nervous system. Mostly confined in dendrites, not in axons, and is most abundant in dendritic spines.

It localises to the cytoplasm. The protein resides in the membrane. Its subcellular location is the cell projection. It is found in the dendritic spine. Calmodulin-binding scaffolding protein which is the center of the striatin-interacting phosphatase and kinase (STRIPAK) complexes. STRIPAK complexes have critical roles in protein (de)phosphorylation and are regulators of multiple signaling pathways including Hippo, MAPK, nuclear receptor and cytoskeleton remodeling. Different types of STRIPAK complexes are involved in a variety of biological processes such as cell growth, differentiation, apoptosis, metabolism and immune regulation. This Rattus norvegicus (Rat) protein is Striatin (Strn).